The primary structure comprises 137 residues: Small ribosomal subunit protein uS19 (137 aa).

Belongs to the universal ribosomal protein uS19 family.

Functionally, protein S19 forms a complex with S13 that binds strongly to the 16S ribosomal RNA. This Methanoculleus marisnigri (strain ATCC 35101 / DSM 1498 / JR1) protein is Small ribosomal subunit protein uS19.